A 308-amino-acid chain; its full sequence is uncharacterized protein (308 aa).

An N-terminal signal peptide occupies residues methionine 1–alanine 28.

This is an uncharacterized protein from Methanocaldococcus jannaschii (strain ATCC 43067 / DSM 2661 / JAL-1 / JCM 10045 / NBRC 100440) (Methanococcus jannaschii).